Here is a 926-residue protein sequence, read N- to C-terminus: Alpha-aminoadipic semialdehyde synthase, mitochondrial (926 aa).

A mitochondrion-targeting transit peptide spans 1–27; it reads MLQVHRTGLGRLGVSLSKGLHHKAVLA. The interval 28–476 is lysine-ketoglutarate reductase; it reads VRREDVNAWE…ESRERAQSLS (449 aa). N6-acetyllysine is present on residues K48 and K56. K93 is modified (N6-acetyllysine; alternate). The residue at position 93 (K93) is an N6-succinyllysine; alternate. K128 carries the N6-acetyllysine modification. The residue at position 138 (K138) is an N6-acetyllysine; alternate. Residue K138 is modified to N6-succinyllysine; alternate. Residue K274 is modified to N6-succinyllysine. K286 carries the post-translational modification N6-acetyllysine; alternate. K286 is modified (N6-succinyllysine; alternate). K333 is subject to N6-succinyllysine. The residue at position 458 (K458) is an N6-acetyllysine; alternate. K458 carries the N6-succinyllysine; alternate modification. Residues 477–926 form a saccharopine dehydrogenase region; the sequence is MGTRRKVLVL…IYTTQSTIKP (450 aa). NAD(+) is bound by residues S488, D512, and Q516. K523 carries the post-translational modification N6-acetyllysine; alternate. K523 carries the post-translational modification N6-succinyllysine; alternate. Residue I533 participates in NAD(+) binding. K535 is modified (N6-acetyllysine; alternate). An N6-succinyllysine; alternate modification is found at K535. NAD(+) contacts are provided by L554, A576, and S577. 577 to 578 contributes to the L-saccharopine binding site; that stretch reads SY. K584 bears the N6-acetyllysine; alternate mark. An N6-succinyllysine; alternate modification is found at K584. NAD(+) contacts are provided by L603, D604, and P605. Residue D604 participates in L-saccharopine binding. R703 contacts L-saccharopine. Residue K707 is modified to N6-acetyllysine. Residue 724–726 participates in L-saccharopine binding; it reads TLR. K732 is modified (N6-succinyllysine). K739 carries the N6-acetyllysine modification. An N6-acetyllysine; alternate modification is found at K761. K761 is modified (N6-succinyllysine; alternate). The residue at position 780 (K780) is an N6-acetyllysine.

It in the N-terminal section; belongs to the AlaDH/PNT family. This sequence in the C-terminal section; belongs to the saccharopine dehydrogenase family. In terms of assembly, homotetramer. Expressed in all 16 tissues examined with highest expression in the liver.

Its subcellular location is the mitochondrion. It catalyses the reaction L-saccharopine + NADP(+) + H2O = L-lysine + 2-oxoglutarate + NADPH + H(+). The catalysed reaction is L-saccharopine + NAD(+) + H2O = (S)-2-amino-6-oxohexanoate + L-glutamate + NADH + H(+). It functions in the pathway amino-acid degradation; L-lysine degradation via saccharopine pathway; glutaryl-CoA from L-lysine: step 1/6. The protein operates within amino-acid degradation; L-lysine degradation via saccharopine pathway; glutaryl-CoA from L-lysine: step 2/6. Its function is as follows. Bifunctional enzyme that catalyzes the first two steps in lysine degradation. The polypeptide is Alpha-aminoadipic semialdehyde synthase, mitochondrial (Homo sapiens (Human)).